The chain runs to 465 residues: Hepatocyte nuclear factor 6 (465 aa).

4 disordered regions span residues 17 to 55, 120 to 141, 264 to 290, and 442 to 465; these read SHEP…SMGM, DKFP…HQRL, LLGT…GQME, and DKWQ…CTKA. The segment covering 123 to 140 has biased composition (basic residues); the sequence is PHHHHHHHHHHHPHHHQR. Residues 273-288 are compositionally biased toward polar residues; sequence PSVTGAQVSNGSNSGQ. Residues 283-369 constitute a DNA-binding region (CUT); the sequence is GSNSGQMEEI…QRMSALRLAA (87 aa). Residues 385–444 constitute a DNA-binding region (homeobox); it reads PKKPRLVFTDVQRRTLHAIFKENKRPSKELQITISQQLGLELSTVSNFFMNARRRSLDKW. Residues 448-465 show a composition bias toward low complexity; it reads GSSNSGNSSSSSSTCTKA.

This sequence belongs to the CUT homeobox family. In terms of assembly, binds DNA as a monomer. Highly expressed in liver; lower expression in testis and skin.

Its subcellular location is the nucleus. Its function is as follows. Transcriptional activator. Binds the consensus sequence 5'-DHWATTGAYTWWD-3' on a variety of gene promoters such as those of HNF3B and TTR. Important for liver genes transcription. The polypeptide is Hepatocyte nuclear factor 6 (ONECUT1) (Homo sapiens (Human)).